A 1432-amino-acid chain; its full sequence is uncharacterized protein (1432 aa).

9 disordered regions span residues 1–72 (MDTI…NYYN), 208–237 (NKIENNNNNNNNKINNENNNEKNKNNNNGQ), 280–335 (ERNE…ENNL), 531–607 (IVKS…NNSS), 690–712 (QNKSPLISPSLSKSNTTTTTTTT), 738–801 (NNTL…NGGR), 896–950 (QSNN…SPPT), 1044–1076 (NINSNSNNNNNNNNNNNNNNNNNNNNYNNNNNN), and 1303–1359 (NNNN…NTTP). Low complexity-rich tracts occupy residues 14-72 (INNN…NYYN), 208-225 (NKIENNNNNNNNKINNEN), and 284-300 (LTSPASSLPSLPSLPSS). Residues 315–325 (QEEEEEEEEED) are compositionally biased toward acidic residues. Composition is skewed to low complexity over residues 536-575 (SSSNLNKINQNNQNNNNNNIINNNNNNNNQNNTTTNNKNK), 583-607 (DNNTVFNNNTTTTNNNNNNNNNNSS), 691-712 (NKSPLISPSLSKSNTTTTTTTT), 744-779 (NMNNNNNNNNNNNNNNNNNNNNNNNNNNNNNNNSNN), and 896-944 (QSNN…SSSN). Gly residues predominate over residues 1311–1320 (NGNGNGGING). Positions 1321 to 1333 (NNGNNSGSNNKEN) are enriched in low complexity. Residues 1334–1346 (GGTGAGIGGGGGL) show a composition bias toward gly residues. Residues 1347–1359 (QLPNNNNNNNTTP) are compositionally biased toward low complexity.

This is an uncharacterized protein from Dictyostelium discoideum (Social amoeba).